Here is a 422-residue protein sequence, read N- to C-terminus: m7GpppN-mRNA hydrolase (422 aa).

A Nudix hydrolase domain is found at 95–226; the sequence is MGVPTYGAII…KLGLAPNKFF (132 aa). The short motif at 129-150 is the Nudix box element; sequence GKVNKEEAPHDCAAREVFEETG. Residues Glu-144 and Glu-148 each coordinate Mn(2+). Ser-246, Ser-247, Ser-249, Ser-276, and Ser-284 each carry phosphoserine. The interval 247–347 is disordered; it reads SDSDNGFSSA…GVHGQPAKQQ (101 aa). Low complexity predominate over residues 249-258; sequence SDNGFSSAGS. The span at 303–312 shows a compositional bias: basic and acidic residues; that stretch reads NHGEVSDLLK.

This sequence belongs to the Nudix hydrolase family. DCP2 subfamily. In terms of assembly, found in a mRNA decay complex with LSM1, LSM3, LSM4, EXOSC2, EXOSC4, EXOSC10, PARN, XRN1, CNOT6, UPF1, UPF2 and UPF3B. Forms a complex with DCP1A, EDC3, DDX6 and EDC4/HEDLS, within this complex directly interacts with EDC4/HEDLS. Interacts with DPC1B, UPF1, UPF2 and UPF3B. Associates with polysomes. Interacts (via N-terminus and C-terminus) with TRIM21 (via N-terminus and C-terminus). Interacts with LIMD1, WTIP and AJUBA. Interacts with DDX17 in an RNA-dependent manner. Interacts with ZC3HAV1. Interacts with APOBEC3G in an RNA-dependent manner. Interacts with ZFP36L1 (via N-terminus). Interacts with NBDY. Mn(2+) serves as cofactor. The cofactor is Mg(2+). As to expression, strongly expressed in brain and testis. Weakly expressed in lung. Not detected in heart, liver, kidney and muscle (at protein level).

It is found in the cytoplasm. Its subcellular location is the P-body. It localises to the nucleus. It catalyses the reaction a 5'-end (N(7)-methyl 5'-triphosphoguanosine)-ribonucleoside in mRNA + H2O = N(7)-methyl-GDP + a 5'-end phospho-ribonucleoside in mRNA + 2 H(+). In terms of biological role, decapping metalloenzyme that catalyzes the cleavage of the cap structure on mRNAs. Removes the 7-methyl guanine cap structure from mRNA molecules, yielding a 5'-phosphorylated mRNA fragment and 7m-GDP. Necessary for the degradation of mRNAs, both in normal mRNA turnover and in nonsense-mediated mRNA decay. Plays a role in replication-dependent histone mRNA degradation. Has higher activity towards mRNAs that lack a poly(A) tail. Has no activity towards a cap structure lacking an RNA moiety. The presence of a N(6)-methyladenosine methylation at the second transcribed position of mRNAs (N(6),2'-O-dimethyladenosine cap; m6A(m)) provides resistance to DCP2-mediated decapping. Blocks autophagy in nutrient-rich conditions by repressing the expression of ATG-related genes through degradation of their transcripts. The polypeptide is m7GpppN-mRNA hydrolase (Dcp2) (Mus musculus (Mouse)).